The primary structure comprises 102 residues: Small ribosomal subunit protein uS10 (102 aa).

It belongs to the universal ribosomal protein uS10 family. In terms of assembly, part of the 30S ribosomal subunit.

Its function is as follows. Involved in the binding of tRNA to the ribosomes. The sequence is that of Small ribosomal subunit protein uS10 from Streptococcus thermophilus (strain CNRZ 1066).